Consider the following 446-residue polypeptide: MSFKEEYQKKLKTADEAVKVVKSGDWLEYGWCVTTPAALDKALAKRMPELENINIRGGIVMWPLEITKIDSPADHFTWNSWHMGGLERKWIKEGFSYYAPIRYSELPGYYRNYIDHVDVAMMQVAPMDEHGFFNFGPSASHLAAMLEKADCVIVEVNENMPRCLGGFEEGVHISKVDMIVEGENPAIAELGGGGAATDVDKAVAKLIVDQIPNGACLQLGIGGMPNAVGSMIAESDLKDLGVHTEMYVDAFVDIAKAGKITGARKNIDRYRQTYAFAAGTKKLYDYLNDNPECMSAPVNYTNDIARVSSIDNFISINNAVDVDLYGQISAESSGIKQISGAGGQLDFVMGAYLSNGGKSFVCLSSTFTDKAGQMHSRILPTLHNGSIVTDTRANAHYIVTEYGMANMKGLSAWQRAEALINIAHPDFRDQLIKDAEKAQIWRRSNK.

Position 220 to 224 (220 to 224 (GIGGM)) interacts with CoA. Glutamate 245 serves as the catalytic 5-glutamyl coenzyme A thioester intermediate. CoA contacts are provided by valine 320, glycine 343, and lysine 370.

Belongs to the acetyl-CoA hydrolase/transferase family. Butyryl-CoA CoA-transferase subfamily.

It carries out the reaction butanoate + acetyl-CoA = butanoyl-CoA + acetate. The enzyme catalyses propanoate + acetyl-CoA = propanoyl-CoA + acetate. The protein operates within lipid metabolism; butanoate metabolism. In terms of biological role, coenzyme A-transferase that converts butyryl-CoA to butyrate. Can also use proprionyl-CoA as substrate in vitro. The chain is Butyryl-CoA:acetate CoA-transferase from Anaerostipes caccae (strain DSM 14662 / CCUG 47493 / JCM 13470 / NCIMB 13811 / L1-92).